Here is a 309-residue protein sequence, read N- to C-terminus: MSEVNISASDVRELREKTGAGMMDCKKALIETKGNLEEAVDFLRTKGLAAAAKKAGRVAAEGLTAAKVDGLTGVVVEINSETDFVARNEQFQNLVTNIANLAINVKDIEELKAAKMPNGKSVEEDVVENIATIGENLTLRRMEVLKVSEGAIGSYVHNEVASNLGKISVLVGLQSSAKDTAKLEALAKQIAVHVAGNNPQSIDDSGLDQALVERERKVFFEKSKEEGKPDNIIEKMVEGRIRKFFAEVVLLQQNFLFDNKLTVAEVIKNAAKELGAEIQITKFIRYELGEGIEQEEKNFADEVAAVMKG.

The tract at residues 82–85 (TDFV) is involved in Mg(2+) ion dislocation from EF-Tu.

This sequence belongs to the EF-Ts family.

It is found in the cytoplasm. Functionally, associates with the EF-Tu.GDP complex and induces the exchange of GDP to GTP. It remains bound to the aminoacyl-tRNA.EF-Tu.GTP complex up to the GTP hydrolysis stage on the ribosome. This Rickettsia bellii (strain OSU 85-389) protein is Elongation factor Ts.